The primary structure comprises 118 residues: Small ribosomal subunit protein uS17 (118 aa).

Belongs to the universal ribosomal protein uS17 family. In terms of assembly, part of the 30S ribosomal subunit.

One of the primary rRNA binding proteins, it binds specifically to the 5'-end of 16S ribosomal RNA. In Methanopyrus kandleri (strain AV19 / DSM 6324 / JCM 9639 / NBRC 100938), this protein is Small ribosomal subunit protein uS17.